The chain runs to 67 residues: Large ribosomal subunit protein bL35 (67 aa).

This sequence belongs to the bacterial ribosomal protein bL35 family.

This is Large ribosomal subunit protein bL35 from Acidiphilium cryptum (strain JF-5).